The sequence spans 197 residues: Protein RmlC homolog (197 aa).

Histidine 76 serves as the catalytic Proton acceptor. Tyrosine 140 acts as the Proton donor in catalysis.

In terms of biological role, could catalyze a 3,5-epimerization. This Streptococcus pyogenes serotype M6 (strain ATCC BAA-946 / MGAS10394) protein is Protein RmlC homolog (rfbC).